The primary structure comprises 508 residues: Photosystem II CP47 reaction center protein (508 aa).

6 consecutive transmembrane segments (helical) span residues 21 to 36, 101 to 115, 140 to 156, 203 to 218, 237 to 252, and 457 to 472; these read SVHI…WAGS, IVFS…IWHW, GIHL…FGAF, IAAG…FHLS, VLSS…AFVV, and TFAL…HGAR.

It belongs to the PsbB/PsbC family. PsbB subfamily. In terms of assembly, PSII is composed of 1 copy each of membrane proteins PsbA, PsbB, PsbC, PsbD, PsbE, PsbF, PsbH, PsbI, PsbJ, PsbK, PsbL, PsbM, PsbT, PsbX, PsbY, PsbZ, Psb30/Ycf12, at least 3 peripheral proteins of the oxygen-evolving complex and a large number of cofactors. It forms dimeric complexes. Requires Binds multiple chlorophylls. PSII binds additional chlorophylls, carotenoids and specific lipids. as cofactor.

The protein resides in the plastid. Its subcellular location is the chloroplast thylakoid membrane. In terms of biological role, one of the components of the core complex of photosystem II (PSII). It binds chlorophyll and helps catalyze the primary light-induced photochemical processes of PSII. PSII is a light-driven water:plastoquinone oxidoreductase, using light energy to abstract electrons from H(2)O, generating O(2) and a proton gradient subsequently used for ATP formation. The chain is Photosystem II CP47 reaction center protein from Oryza nivara (Indian wild rice).